Reading from the N-terminus, the 551-residue chain is Tetrachloroethene reductive dehalogenase (551 aa).

Positions 1 to 39 (MGEINRRNFLKASMLGAAAAAVASASVVKGVVSPLVADA) form a signal peptide, tat-type signal. Residues 411-440 (PRKFGVREFCRLCKKCADACPAQAISHEKD) form the 4Fe-4S ferredoxin-type 1 domain. [4Fe-4S] cluster-binding residues include Cys420, Cys423, Cys426, Cys430, Cys467, Cys478, Cys481, and Cys485. The 19-residue stretch at 478–496 (CSNCVAVCSWNKVETWNHD) folds into the 4Fe-4S ferredoxin-type 2 domain.

This sequence belongs to the PceA family. [4Fe-4S] cluster is required as a cofactor. Corrinoid serves as cofactor. Predicted to be exported by the Tat system. The position of the signal peptide cleavage has been experimentally proven.

Its subcellular location is the cell membrane. The catalysed reaction is trichloroethene + chloride + A + H(+) = tetrachloroethene + AH2. It catalyses the reaction trichloroethene + AH2 = (Z)-1,2-dichloroethene + chloride + A + H(+). Catalyzes the reductive dechlorination of tetrachloroethene (PCE) to trichloroethene (TCE) and of trichloroethene to cis-1,2-dichloroethene (DCE). Reduced methyl viologen can act as the artificial electron donor. This Desulfitobacterium hafniense (Desulfitobacterium frappieri) protein is Tetrachloroethene reductive dehalogenase.